A 410-amino-acid chain; its full sequence is Dipeptidase ataJ (410 aa).

Zn(2+)-binding residues include His27, Asp29, and Glu138. Position 165 (His165) interacts with substrate. The tract at residues 180 to 200 (TSSPWSEYGGQTHDPGDEPSR) is disordered. Substrate-binding residues include Arg258 and Asp318.

Belongs to the metallo-dependent hydrolases superfamily. Peptidase M19 family. Zn(2+) serves as cofactor.

The enzyme catalyses an L-aminoacyl-L-amino acid + H2O = 2 an L-alpha-amino acid. It participates in mycotoxin biosynthesis. Functionally, dipeptidase; part of the gene cluster that mediates the biosynthesis of acetylaranotin, a member of the epipolythiodioxopiperazine (ETP) class of toxins characterized by a disulfide-bridged cyclic dipeptide. The first step of acetylaranotin biosynthesis is performed by the NRPS ataP which produces diketopiperazine cyclo-L-Phe-L-Phe via the condensation of 2 phenylalanines (L-Phe). The ataC domain of ataTC then catalyzes the formation of bishydroxylation of cyclo-L-Phe-L-Phe. The glutathione S-transferase domain ataG in ataIMG further catalyzes the conjugation of two glutathiones to the bishydroxylated intermediate. Next, the dipeptidase ataJ removes the Glu residues. The following step is performed by the carbon sulfur lyase domain ataI of ataIMG which may convert the bis-cysteinyl adduct to yield an epidithiol intermediate. The ataT domain from ataTC then catalyzes the oxidation of the free dithiols, followed by a cyclization step catalyzed by the cytochrome P450 ataF. AtaF probably acts as an epoxidase to promote a dual epoxidation formation at C8 and C9 along with C8' and C9', followed by the spontaneous nucleophilic attack of the amide nitrogens N10 and N10' to yield an intermediate with the pyrrolidine partial structure. The final steps of acetylaranotin biosynthesis involve the acetylation and ring rearrangement of an epitetrathiodiketopiperazine intermediate to produce acetylaranotin. AtaH probably catalyzes the acetylation of epitetrathiodiketopiperazine to produce a diacetate and ataY is responsible for the formation of the dihydrooxepin moiety that converts the diacetate intermediate to acetylaranotin via acetylapoaranotin. Both enzymes could function independently in the absence of the other. The acetylaranotin bis-thiomethyltransferase ataS located outside of acetylaranotin gene cluster is the main thiomethyltransferase responsible for converting acetylaranotin and its related intermediates to their methylated forms. The polypeptide is Dipeptidase ataJ (Aspergillus terreus (strain NIH 2624 / FGSC A1156)).